A 361-amino-acid chain; its full sequence is Peptide chain release factor 1 (361 aa).

N5-methylglutamine is present on Gln236.

This sequence belongs to the prokaryotic/mitochondrial release factor family. Post-translationally, methylated by PrmC. Methylation increases the termination efficiency of RF1.

Its subcellular location is the cytoplasm. In terms of biological role, peptide chain release factor 1 directs the termination of translation in response to the peptide chain termination codons UAG and UAA. The polypeptide is Peptide chain release factor 1 (Lactobacillus acidophilus (strain ATCC 700396 / NCK56 / N2 / NCFM)).